The following is a 483-amino-acid chain: Glutamate mutase epsilon subunit (483 aa).

R66 is an L-glutamate binding site. Adenosylcob(III)alamin is bound at residue G68. Residue R100 participates in L-glutamate binding. Residue N123 participates in adenosylcob(III)alamin binding. L-glutamate is bound by residues R149 to H150, E171, and Y177. P180 contributes to the adenosylcob(III)alamin binding site. Residue Y181 participates in L-glutamate binding. Adenosylcob(III)alamin contacts are provided by F297, K326, E330, and I334.

Belongs to the methylaspartate mutase GlmE subunit family. In terms of assembly, heterotetramer composed of 2 epsilon subunits (GlmE) and 2 sigma subunits (GlmS). GlmE exists as a homodimer and GlmS as a monomer. Adenosylcob(III)alamin is required as a cofactor.

The enzyme catalyses (2S,3S)-3-methyl-L-aspartate = L-glutamate. The protein operates within amino-acid degradation; L-glutamate degradation via mesaconate pathway; acetate and pyruvate from L-glutamate: step 1/4. With respect to regulation, competitively inhibited by (2S,4S)-4-fluoroglutamate, 2-methyleneglutarate, (2R,3RS)-3-fluoroglutamate and (S)-3-methylitaconate. In terms of biological role, catalyzes the carbon skeleton rearrangement of L-glutamate to L-threo-3-methylaspartate ((2S,3S)-3-methylaspartate). The chain is Glutamate mutase epsilon subunit from Clostridium cochlearium.